The chain runs to 402 residues: Transcription regulatory protein OpdE (402 aa).

Helical transmembrane passes span 22–42 (VLAI…PVSL), 60–80 (GIAI…SVAG), 86–106 (TLLL…ALAP), 108–128 (YFVY…FWSM), 147–167 (ALVN…GAWL), 170–190 (LIGW…ALAW), 220–240 (PGVM…FSLF), 256–276 (AHVS…TLLI), 296–316 (ALIA…VVLL), 318–338 (LWGL…ARVF), 348–368 (LFVA…GLLF), and 375–395 (ATFF…ILTA).

To B.subtilis YwfA.

The protein resides in the cell membrane. Regulates the expression of oprD which encodes the imipenem-specific porin. This chain is Transcription regulatory protein OpdE (opdE), found in Pseudomonas aeruginosa (strain ATCC 15692 / DSM 22644 / CIP 104116 / JCM 14847 / LMG 12228 / 1C / PRS 101 / PAO1).